A 60-amino-acid polypeptide reads, in one-letter code: Cytotoxin 8 (60 aa).

4 disulfides stabilise this stretch: cysteine 3-cysteine 21, cysteine 14-cysteine 38, cysteine 42-cysteine 53, and cysteine 54-cysteine 59.

It belongs to the three-finger toxin family. Short-chain subfamily. Type IA cytotoxin sub-subfamily. As to quaternary structure, monomer in solution; Homodimer and oligomer in the presence of negatively charged lipids forming a pore with a size ranging between 20 and 30 Angstroms. Expressed by the venom gland.

It is found in the secreted. The protein resides in the target cell membrane. Its function is as follows. Shows cytolytic activity on many different cells by forming pore in lipid membranes. In vivo, increases heart rate or kills the animal by cardiac arrest. In addition, it binds to heparin with high affinity, interacts with Kv channel-interacting protein 1 (KCNIP1) in a calcium-independent manner, and binds to integrin alpha-V/beta-3 (ITGAV/ITGB3) with moderate affinity. This is Cytotoxin 8 from Naja annulifera (Banded Egyptian cobra).